Reading from the N-terminus, the 401-residue chain is MVVSVKVFKKATPNGKVTFYLGRRDFIDHLDYCDPVDGVIVVEPEYLKNRKVFGQLATTYRYGREEDEVMGVKFSKELILSRDEIVPMTNPNMEMTPMQEKLVRKLGSNAHPFTFHFPPNSPSSVTLQQEGDDNGKPLGVEYTIRAFVGDSEDDRQHKRSMVSLVIKKLQYAPLNRGQRLPSSLVSKGFTFSNGKISLEVTLDREIYYHGEKTAATVQVSNNSKKSVKSIKCFIVQHTEITMVNAQFSKHVAQLETKEGCPITPGANLTKTFYLIPLAANNKDRHGIALDGHLKDEDVNLASSTMVQEGKNTGDACGIVISYSVRIKLNCGTLGGEMQTDVPFKLLQPAPGTIEKKRSNAMKKMKSIEQHRNVKGYYQDDDDNIVFEDFAKMRMNNVNMAD.

Belongs to the arrestin family. Inner and outer segments, and the inner plexiform regions of the retina.

Its function is as follows. Undergoes light-induced phosphorylation, probably plays an important role in the photoreceptor transduction. The protein is Phosrestin-1 (Arr2) of Drosophila miranda (Fruit fly).